Reading from the N-terminus, the 537-residue chain is 2-succinyl-5-enolpyruvyl-6-hydroxy-3-cyclohexene-1-carboxylate synthase (537 aa).

The protein belongs to the TPP enzyme family. MenD subfamily. As to quaternary structure, homodimer. It depends on Mg(2+) as a cofactor. The cofactor is Mn(2+). Thiamine diphosphate serves as cofactor.

It carries out the reaction isochorismate + 2-oxoglutarate + H(+) = 5-enolpyruvoyl-6-hydroxy-2-succinyl-cyclohex-3-ene-1-carboxylate + CO2. The protein operates within quinol/quinone metabolism; 1,4-dihydroxy-2-naphthoate biosynthesis; 1,4-dihydroxy-2-naphthoate from chorismate: step 2/7. Its pathway is quinol/quinone metabolism; menaquinone biosynthesis. Its function is as follows. Catalyzes the thiamine diphosphate-dependent decarboxylation of 2-oxoglutarate and the subsequent addition of the resulting succinic semialdehyde-thiamine pyrophosphate anion to isochorismate to yield 2-succinyl-5-enolpyruvyl-6-hydroxy-3-cyclohexene-1-carboxylate (SEPHCHC). This Rhodococcus erythropolis (strain PR4 / NBRC 100887) protein is 2-succinyl-5-enolpyruvyl-6-hydroxy-3-cyclohexene-1-carboxylate synthase.